We begin with the raw amino-acid sequence, 964 residues long: uncharacterized protein (964 aa).

2 disordered regions span residues 1 to 31 (MDSE…SDCE) and 169 to 199 (EETY…DEIS). A compositionally biased stretch (polar residues) spans 10–27 (HSICNSVSSGENYKSPES). Positions 656 to 840 (EVMESLQVEI…LILNQTSMAK (185 aa)) form a coiled coil.

This is an uncharacterized protein from Caenorhabditis elegans.